The sequence spans 96 residues: Methanol dehydrogenase [cytochrome c] subunit 2 (96 aa).

Positions 1 to 22 (MKTTLIAAAIVALSGLAAPALA) are cleaved as a signal peptide. Cys28 and Cys34 are oxidised to a cystine. The interval 45–75 (IAGSKYDPKHDPKELNKQADSIKQMEERNKK) is disordered. A compositionally biased stretch (basic and acidic residues) spans 50–61 (YDPKHDPKELNK).

The protein belongs to the methanol dehydrogenase subunit 2 family. Heterotetramer composed of 2 alpha and 2 beta subunits.

Its subcellular location is the periplasm. It catalyses the reaction 2 Fe(III)-[cytochrome cL] + a primary alcohol = 2 Fe(II)-[cytochrome cL] + an aldehyde + 2 H(+). Catalyzes the oxidation of primary alcohols including methanol. In Methylorubrum extorquens (strain ATCC 14718 / DSM 1338 / JCM 2805 / NCIMB 9133 / AM1) (Methylobacterium extorquens), this protein is Methanol dehydrogenase [cytochrome c] subunit 2 (moxI).